Here is a 312-residue protein sequence, read N- to C-terminus: 4-diphosphocytidyl-2-C-methyl-D-erythritol kinase (312 aa).

Residue Lys-16 is part of the active site. 101–111 provides a ligand contact to ATP; that stretch reads PIGAGLAGGSS. Asp-143 is an active-site residue.

The protein belongs to the GHMP kinase family. IspE subfamily.

It carries out the reaction 4-CDP-2-C-methyl-D-erythritol + ATP = 4-CDP-2-C-methyl-D-erythritol 2-phosphate + ADP + H(+). It participates in isoprenoid biosynthesis; isopentenyl diphosphate biosynthesis via DXP pathway; isopentenyl diphosphate from 1-deoxy-D-xylulose 5-phosphate: step 3/6. In terms of biological role, catalyzes the phosphorylation of the position 2 hydroxy group of 4-diphosphocytidyl-2C-methyl-D-erythritol. The protein is 4-diphosphocytidyl-2-C-methyl-D-erythritol kinase of Prochlorococcus marinus (strain MIT 9515).